The primary structure comprises 256 residues: DNA repair protein RecO (256 aa).

The protein belongs to the RecO family.

Functionally, involved in DNA repair and RecF pathway recombination. The chain is DNA repair protein RecO from Clostridium novyi (strain NT).